Here is a 41-residue protein sequence, read N- to C-terminus: Photosystem II reaction center protein Y (41 aa).

At Met-1 the chain carries N-formylmethionine. Over 1-4 the chain is Lumenal; the sequence is MDWR. Residues 5-23 traverse the membrane as a helical segment; it reads VLVVLLPVLLAAGWAVRNI. Topologically, residues 24–41 are cytoplasmic; it reads LPYAVKQVQKLLQKAKAA.

This sequence belongs to the PsbY family. In terms of assembly, PSII is composed of 1 copy each of membrane proteins PsbA, PsbB, PsbC, PsbD, PsbE, PsbF, PsbH, PsbI, PsbJ, PsbK, PsbL, PsbM, PsbT, PsbX, PsbY, PsbZ, Psb30/Ycf12, peripheral proteins PsbO, CyanoQ (PsbQ), PsbU, PsbV and a large number of cofactors. It forms dimeric complexes. This protein is only loosely associated with PSII, and is not often found in crystals. Found on the exterior of the PSII dimer, near cytochrome b559 (psbE and psbF). PSII binds multiple chlorophylls, carotenoids and specific lipids. serves as cofactor.

It localises to the cellular thylakoid membrane. Loosely associated component of the core of photosystem II, it is not always seen in crystals. PSII is a light-driven water plastoquinone oxidoreductase, using light energy to abstract electrons from H(2)O, generating a proton gradient subsequently used for ATP formation. The chain is Photosystem II reaction center protein Y from Thermosynechococcus vestitus (strain NIES-2133 / IAM M-273 / BP-1).